Reading from the N-terminus, the 179-residue chain is ATP synthase subunit delta (179 aa).

It belongs to the ATPase delta chain family. In terms of assembly, F-type ATPases have 2 components, F(1) - the catalytic core - and F(0) - the membrane proton channel. F(1) has five subunits: alpha(3), beta(3), gamma(1), delta(1), epsilon(1). F(0) has three main subunits: a(1), b(2) and c(10-14). The alpha and beta chains form an alternating ring which encloses part of the gamma chain. F(1) is attached to F(0) by a central stalk formed by the gamma and epsilon chains, while a peripheral stalk is formed by the delta and b chains.

It is found in the cell inner membrane. Functionally, f(1)F(0) ATP synthase produces ATP from ADP in the presence of a proton or sodium gradient. F-type ATPases consist of two structural domains, F(1) containing the extramembraneous catalytic core and F(0) containing the membrane proton channel, linked together by a central stalk and a peripheral stalk. During catalysis, ATP synthesis in the catalytic domain of F(1) is coupled via a rotary mechanism of the central stalk subunits to proton translocation. Its function is as follows. This protein is part of the stalk that links CF(0) to CF(1). It either transmits conformational changes from CF(0) to CF(1) or is implicated in proton conduction. This Burkholderia vietnamiensis (strain G4 / LMG 22486) (Burkholderia cepacia (strain R1808)) protein is ATP synthase subunit delta.